The following is a 443-amino-acid chain: Chromosomal replication initiator protein DnaA (443 aa).

The tract at residues 1-75 (MNTQLNEIWQ…AIKQVTFKEY (75 aa)) is domain I, interacts with DnaA modulators. Residues 75–105 (YEIAFIVPSQENLNKLTKQTESAGNEDSPLS) are domain II. Residues 106–321 (VLNPKYTFDT…GALNRVIAYS (216 aa)) are domain III, AAA+ region. ATP-binding residues include Gly-150, Gly-152, Lys-153, and Thr-154. The interval 322–443 (SLTENEITVE…SEIKRNLLGK (122 aa)) is domain IV, binds dsDNA.

Belongs to the DnaA family. Oligomerizes as a right-handed, spiral filament on DNA at oriC.

It is found in the cytoplasm. In terms of biological role, plays an essential role in the initiation and regulation of chromosomal replication. ATP-DnaA binds to the origin of replication (oriC) to initiate formation of the DNA replication initiation complex once per cell cycle. Binds the DnaA box (a 9 base pair repeat at the origin) and separates the double-stranded (ds)DNA. Forms a right-handed helical filament on oriC DNA; dsDNA binds to the exterior of the filament while single-stranded (ss)DNA is stabiized in the filament's interior. The ATP-DnaA-oriC complex binds and stabilizes one strand of the AT-rich DNA unwinding element (DUE), permitting loading of DNA polymerase. After initiation quickly degrades to an ADP-DnaA complex that is not apt for DNA replication. Binds acidic phospholipids. The chain is Chromosomal replication initiator protein DnaA from Acetivibrio thermocellus (strain ATCC 27405 / DSM 1237 / JCM 9322 / NBRC 103400 / NCIMB 10682 / NRRL B-4536 / VPI 7372) (Clostridium thermocellum).